Reading from the N-terminus, the 210-residue chain is Thymidylate kinase (210 aa).

Position 10-17 (10-17 (GLEGAGKT)) interacts with ATP.

Belongs to the thymidylate kinase family.

The enzyme catalyses dTMP + ATP = dTDP + ADP. Phosphorylation of dTMP to form dTDP in both de novo and salvage pathways of dTTP synthesis. The protein is Thymidylate kinase of Erwinia tasmaniensis (strain DSM 17950 / CFBP 7177 / CIP 109463 / NCPPB 4357 / Et1/99).